Consider the following 257-residue polypeptide: Uroplakin-1a (257 aa).

The Cytoplasmic segment spans residues 1-13; sequence MASAATEGEKGSP. The helical transmembrane segment at 14-34 threads the bilayer; that stretch reads VVVGLLVVGNIIILLSGLALF. Topologically, residues 35 to 58 are extracellular; sequence AETVWVTADQYRVYPLMGVSGKDD. Residues 59 to 85 traverse the membrane as a helical segment; sequence VFAGAWIAIFCGFSFFVVASFGVGAAL. Residues 86–90 are Cytoplasmic-facing; it reads CRRRY. A helical transmembrane segment spans residues 91-111; the sequence is MILTYLLLMLIVYIFECASCI. Residues 112–229 are Extracellular-facing; sequence TSYTHRDYMV…HIGHAIDSYT (118 aa). Asparagine 169 is a glycosylation site (N-linked (GlcNAc...) asparagine). Residues 230-251 traverse the membrane as a helical segment; it reads WGISWFGFAILMWTLPVMLIAM. Residues 252–257 are Cytoplasmic-facing; that stretch reads YFYTTL.

It belongs to the tetraspanin (TM4SF) family. As to quaternary structure, homodimer; disulfide-linked. Interacts with uroplakin-2 (UPK2). Binds to uropathogenic E.coli fimH.

It is found in the membrane. Its function is as follows. Component of the asymmetric unit membrane (AUM); a highly specialized biomembrane elaborated by terminally differentiated urothelial cells. May play an important role in normal bladder epithelial physiology, possibly in regulating membrane permeability of superficial umbrella cells or in stabilizing the apical membrane through AUM/cytoskeletal interactions. This is Uroplakin-1a (Upk1a) from Mus musculus (Mouse).